The primary structure comprises 489 residues: Ribulose bisphosphate carboxylase large chain (489 aa).

Residues Asn128 and Thr178 each contribute to the substrate site. Lys180 functions as the Proton acceptor in the catalytic mechanism. Position 182 (Lys182) interacts with substrate. Mg(2+) is bound by residues Lys206, Asp208, and Glu209. Lys206 bears the N6-carboxylysine mark. The Proton acceptor role is filled by His298. Substrate is bound by residues Arg299, His331, and Ser383.

The protein belongs to the RuBisCO large chain family. Type I subfamily. Heterohexadecamer of 8 large chains and 8 small chains. Mg(2+) serves as cofactor.

The catalysed reaction is 2 (2R)-3-phosphoglycerate + 2 H(+) = D-ribulose 1,5-bisphosphate + CO2 + H2O. It carries out the reaction D-ribulose 1,5-bisphosphate + O2 = 2-phosphoglycolate + (2R)-3-phosphoglycerate + 2 H(+). Functionally, ruBisCO catalyzes two reactions: the carboxylation of D-ribulose 1,5-bisphosphate, the primary event in carbon dioxide fixation, as well as the oxidative fragmentation of the pentose substrate. Both reactions occur simultaneously and in competition at the same active site. This chain is Ribulose bisphosphate carboxylase large chain, found in Nitrosospira multiformis (strain ATCC 25196 / NCIMB 11849 / C 71).